Consider the following 479-residue polypeptide: MRVLFVASEASPFIKTGGLGDVAGALPKALAQKNADVRVVIPKYKEISWEVRDKLRFVKWFNVKVGWREQFCGVWECFHNGVTYYVLDNEAYFKRDEVYGFYDDAERFAFFDRAVLDMLRQIDWQPDLIHCNDWQTGMLPVLLKFEYKRNDMFYWKMKCVYSIHNIAFQGVFDPQILPELFGFDMELYNNTCLKFDDGVSYMKGGLCYSDVITTVSNTYAYEIQTPEYGQRLDGVLRERSYALRGITNGIDYDEFNPKTDKFIKKNYSINSIEDKAINKTELQKELGLTVDKNIPMLAMVTRLTSQKGMDLLVNISDKLLQENVQLVILGTGDKHYEEHFKWLDSRYGNKVSANIKFDNGLANKIYAACDMFLMPSLFEPCGLGQLIALRYGSIPIVRETGGLKDTITAYNEYTGEGNGFSFRNYNSDELYNIIEYALWIYKDKGKWENLIENAMNSDNSWNRSAQIYLDLYRELTGQD.

Lys15 provides a ligand contact to ADP-alpha-D-glucose.

Belongs to the glycosyltransferase 1 family. Bacterial/plant glycogen synthase subfamily.

The catalysed reaction is [(1-&gt;4)-alpha-D-glucosyl](n) + ADP-alpha-D-glucose = [(1-&gt;4)-alpha-D-glucosyl](n+1) + ADP + H(+). The protein operates within glycan biosynthesis; glycogen biosynthesis. Synthesizes alpha-1,4-glucan chains using ADP-glucose. The chain is Glycogen synthase from Clostridium beijerinckii (strain ATCC 51743 / NCIMB 8052) (Clostridium acetobutylicum).